A 520-amino-acid polypeptide reads, in one-letter code: J protein JJJ2 (520 aa).

The J domain occupies 7 to 71; the sequence is TYYSVLGLPT…SSKQEYDAIL (65 aa). Disordered regions lie at residues 82 to 257 and 389 to 409; these read LGYK…DLQN and FESS…RGRP. A compositionally biased stretch (low complexity) spans 91–100; that stretch reads QNQSNNLNQQ. A compositionally biased stretch (polar residues) spans 152-182; it reads TSKNSKEQQGSQETTNTSENLQRNAKGNKNN. The segment covering 397 to 409 has biased composition (basic and acidic residues); the sequence is ENHRSDFNLRGRP.

It localises to the cytoplasm. The protein localises to the nucleus. The sequence is that of J protein JJJ2 (JJJ2) from Vanderwaltozyma polyspora (strain ATCC 22028 / DSM 70294 / BCRC 21397 / CBS 2163 / NBRC 10782 / NRRL Y-8283 / UCD 57-17) (Kluyveromyces polysporus).